The chain runs to 656 residues: Squalene-hopene cyclase (656 aa).

The PFTB 1 repeat unit spans residues 68-110; sequence EQKIANYLRRCQSREHWGWPVYYGGEFNISASVQAYFALKMTG. Residue aspartate 396 is the Proton donor of the active site. PFTB repeat units follow at residues 417–459, 485–525, 533–582, and 591–634; these read LDRA…ALLD, IERG…NASG, VLKC…GLMA, and VKRG…QFFP.

The protein belongs to the terpene cyclase/mutase family.

The enzyme catalyses squalene = hop-22(29)-ene. It catalyses the reaction squalene + H2O = hopan-22-ol. Squalene cyclase that catalyzes the oxygen-independent cyclization of squalene into hopanoids, a class of cyclic triterpenoids including hop-22(29)-ene, hop-17(21)-ene, hop-21(22)-ene, and hopan-22-ol. In Schizosaccharomyces japonicus (strain yFS275 / FY16936) (Fission yeast), this protein is Squalene-hopene cyclase.